Reading from the N-terminus, the 5488-residue chain is Polyketide synthase PksN (5488 aa).

The tract at residues 3-301 (RQLKSPLSEG…NMMAVRSKNI (299 aa)) is condensation. The WD 1 repeat unit spans residues 165–205 (QQPSTADYYDFVDWENRMLTGREGEEHLAYWKEQLSGSLPV). The adenylation stretch occupies residues 493–903 (TYKEVDEKST…EFPGILDQAV (411 aa)). The WD 2 repeat unit spans residues 965-1006 (RKELEKREIVFNRRKPNHLQLTEIEDQVLRIWEETLKVSGFG). Residues 983 to 1058 (LQLTEIEDQV…AISEYILEMK (76 aa)) enclose the Carrier 1 domain. Ser-1018 bears the O-(pantetheine 4'-phosphoryl)serine mark. Residues 1089–1515 (DDSVAIVGIS…GTNAHAIFEQ (427 aa)) enclose the Ketosynthase family 3 (KS3) 1 domain. Catalysis depends on for beta-ketoacyl synthase 1 activity residues Cys-1261, His-1397, and His-1437. Residues 1700–1826 (HPLVHHNTSV…GKAELIQLKR (127 aa)) form an N-terminal hotdog fold 1 region. The PKS/mFAS DH 1 domain occupies 1700 to 1992 (HPLVHHNTSV…TRVMEADIQT (293 aa)). His-1729 acts as the Proton acceptor; for dehydratase activity 1 in catalysis. The C-terminal hotdog fold 1 stretch occupies residues 1840-1992 (DQSKMDAASF…TRVMEADIQT (153 aa)). The active-site Proton donor; for dehydratase activity 1 is Asp-1900. Residues 2165–2204 (KQAKGDGSKPWKDNGVYLISGGAGGLGHIFAKEIAEQTKN) form a WD 3 repeat. The region spanning 2448 to 2525 (SLLDKVKAML…AFGKHLSEEY (78 aa)) is the Carrier 2 domain. O-(pantetheine 4'-phosphoryl)serine is present on Ser-2485. In terms of domain architecture, Ketosynthase family 3 (KS3) 2 spans 2576 to 3012 (PEPIAIVGIS…GVNAHVIIEE (437 aa)). Active-site for beta-ketoacyl synthase 2 activity residues include Cys-2747, His-2882, and His-2928. A coiled-coil region spans residues 3038–3109 (KNEARLKEHA…AAEKSGVEDV (72 aa)). The N-terminal hotdog fold 2 stretch occupies residues 3207–3332 (HPLMHQNTSN…GSAVLNPAEN (126 aa)). The region spanning 3207-3492 (HPLMHQNTSN…FRAAEGGSGS (286 aa)) is the PKS/mFAS DH 2 domain. The active-site Proton acceptor; for dehydratase activity 2 is His-3236. The C-terminal hotdog fold 2 stretch occupies residues 3346–3492 (QESHFSVNEV…FRAAEGGSGS (147 aa)). Residue Asp-3408 is the Proton donor; for dehydratase activity 2 of the active site. The stretch at 3626-3655 (DSHENVESVIEKLKENKRHTEDQHIKYEKG) forms a coiled coil. One copy of the WD 4 repeat lies at 3666–3705 (QIDDREISMPWRDKGVYLITGGAGGLGFIFAKEIARQAEQ). In terms of domain architecture, Carrier 3 spans 3952–4026 (DHIQEVLKQT…AFAGYLSEEY (75 aa)). Residue Ser-3986 is modified to O-(pantetheine 4'-phosphoryl)serine. In terms of domain architecture, Ketosynthase family 3 (KS3) 3 spans 4076–4511 (PEPIAIVGMS…GVNAHVVIEE (436 aa)). Residues Cys-4245, His-4380, and His-4427 each act as for beta-ketoacyl synthase 3 activity in the active site. The tract at residues 4706–4830 (HPLIHVNTSD…GSASIRGAGD (125 aa)) is N-terminal hotdog fold 3. One can recognise a PKS/mFAS DH 3 domain in the interval 4706–4988 (HPLIHVNTSD…SRLLEEGIQP (283 aa)). His-4735 functions as the Proton acceptor; for dehydratase activity 3 in the catalytic mechanism. Residues 4844 to 4988 (SLSTLSHDQC…SRLLEEGIQP (145 aa)) form a C-terminal hotdog fold 3 region. Asp-4906 functions as the Proton donor; for dehydratase activity 3 in the catalytic mechanism. The stretch at 5206–5244 (HNNQPVHTKYKHGGVYVVIGGAGGIGEAWSEYMIRTYQA) is one WD 5 repeat. Positions 5275–5303 (IQADAANREELERAYETMKQTHREINGII) form a coiled coil.

The protein belongs to the ATP-dependent AMP-binding enzyme family. Pantetheine 4'-phosphate is required as a cofactor.

The protein resides in the cytoplasm. It participates in antibiotic biosynthesis; bacillaene biosynthesis. Involved in some intermediate steps for the synthesis of the antibiotic polyketide bacillaene which is involved in secondary metabolism. The sequence is that of Polyketide synthase PksN (pksN) from Bacillus subtilis (strain 168).